The sequence spans 34 residues: GFSSLFKAGAKYLLKSVGKAGAQQLACKAANNCA.

A disulfide bridge connects residues C27 and C33.

As to expression, expressed by the skin glands.

The protein localises to the secreted. Functionally, antimicrobial peptide. Active against the Gram-positive bacteria S.aureus FDA209P (MIC=14.9 ug/ml) and B.subtilis ATCC 6633 (MIC&gt;64 ug/ml), but not active against the Gram-negative bacterium E.coli or the fungus C.albicans. This is Brevinin-2GHa from Sylvirana guentheri (Gunther's frog).